We begin with the raw amino-acid sequence, 150 residues long: UPF0756 membrane protein APL_0366 (150 aa).

A run of 4 helical transmembrane segments spans residues 12–34 (LVVLIFLGVVGNNNSITIAATVL), 52–72 (HGLSIGIIILTIGVLSPIVSG), 82–102 (FLNWKMLLAVVAGIAVAWLGG), and 123–143 (IIGVALLGGVPVGPLIAAGIL).

Belongs to the UPF0756 family.

The protein localises to the cell membrane. In Actinobacillus pleuropneumoniae serotype 5b (strain L20), this protein is UPF0756 membrane protein APL_0366.